The primary structure comprises 126 residues: MAVMGLGTDIIEIGRIEKQLTRSHRLAQRVLTATELAIFDEHSFPARYLAKRFAAKEAAVKALGIGIGNGISFQDVEVHNLPSGQPFLKFYAKFAQLCEQRNITSSHISISDEQHYAIATVILESP.

Mg(2+)-binding residues include aspartate 9 and glutamate 57.

This sequence belongs to the P-Pant transferase superfamily. AcpS family. The cofactor is Mg(2+).

The protein resides in the cytoplasm. It catalyses the reaction apo-[ACP] + CoA = holo-[ACP] + adenosine 3',5'-bisphosphate + H(+). In terms of biological role, transfers the 4'-phosphopantetheine moiety from coenzyme A to a Ser of acyl-carrier-protein. This is Holo-[acyl-carrier-protein] synthase from Pseudoalteromonas atlantica (strain T6c / ATCC BAA-1087).